The chain runs to 614 residues: Probable NOT transcription complex subunit VIP2 (614 aa).

3 disordered regions span residues 1–46 (MSNL…NLQG), 58–89 (NMQG…SSGR), and 361–391 (NLGA…GLRP). The span at 364-381 (ATYSSHRPQQQPQHTSST) shows a compositional bias: polar residues.

Belongs to the CNOT2/3/5 family. In terms of assembly, interacts with Agrobacterium tumefaciens VirE2. Binds to VIP1. Forms a complex made of Agrobacterium VirE2, VIP1, VIP2 and single-stranded DNA (ssDNA).

It localises to the nucleus. In terms of biological role, transcriptional regulator required for Agrobacterium-mediated stable genetic transformation by T-DNA integration in host genome, but not for T-DNA transient expression. The chain is Probable NOT transcription complex subunit VIP2 (VIP2) from Arabidopsis thaliana (Mouse-ear cress).